Consider the following 521-residue polypeptide: NADH-quinone oxidoreductase subunit N (521 aa).

14 consecutive transmembrane segments (helical) span residues 15–35 (LAPE…DLIL), 43–63 (IIGW…IWRM), 98–118 (LLKI…LGST), 128–148 (AEFY…ASSG), 150–170 (LVTL…LVGL), 185–205 (VVTG…LYGV), 227–247 (ALVY…IAAA), 261–281 (PTPV…AAVF), 303–323 (VFFA…VSAL), 331–351 (LLAL…AISV), 363–383 (VFYL…VTVI), 406–426 (AAAM…AGFF), 442–462 (WLVA…FGII), and 485–505 (TVIW…GPLM).

It belongs to the complex I subunit 2 family. NDH-1 is composed of 14 different subunits. Subunits NuoA, H, J, K, L, M, N constitute the membrane sector of the complex.

The protein localises to the cell membrane. The catalysed reaction is a quinone + NADH + 5 H(+)(in) = a quinol + NAD(+) + 4 H(+)(out). NDH-1 shuttles electrons from NADH, via FMN and iron-sulfur (Fe-S) centers, to quinones in the respiratory chain. The immediate electron acceptor for the enzyme in this species is believed to be a menaquinone. Couples the redox reaction to proton translocation (for every two electrons transferred, four hydrogen ions are translocated across the cytoplasmic membrane), and thus conserves the redox energy in a proton gradient. This chain is NADH-quinone oxidoreductase subunit N, found in Paenibacillus sp. (strain JDR-2).